Consider the following 513-residue polypeptide: Putative ribose/galactose/methyl galactoside import ATP-binding protein 2 (513 aa).

ABC transporter domains lie at 24-260 (LSAE…VGRE) and 270-510 (VPIG…VMEL). Residue 56-63 (GENGAGKS) participates in ATP binding.

Belongs to the ABC transporter superfamily. Carbohydrate importer 2 (CUT2) (TC 3.A.1.2) family.

The protein localises to the cell inner membrane. The enzyme catalyses D-ribose(out) + ATP + H2O = D-ribose(in) + ADP + phosphate + H(+). The catalysed reaction is D-galactose(out) + ATP + H2O = D-galactose(in) + ADP + phosphate + H(+). Its function is as follows. Part of an ABC transporter complex involved in carbohydrate import. Could be involved in ribose, galactose and/or methyl galactoside import. Responsible for energy coupling to the transport system. This is Putative ribose/galactose/methyl galactoside import ATP-binding protein 2 from Rhizobium etli (strain ATCC 51251 / DSM 11541 / JCM 21823 / NBRC 15573 / CFN 42).